A 506-amino-acid chain; its full sequence is UBX domain-containing protein 4 (506 aa).

The interval 1 to 199 (MLWFQGAIPA…PAEDLTVRVE (199 aa)) is interaction with UBQLN1. Over 1–411 (MLWFQGAIPA…VPSSSGDIWT (411 aa)) the chain is Cytoplasmic. Composition is skewed to polar residues over residues 114-136 (SLKGETSVTNDKQSESSVSTPSA) and 177-189 (SLSQEPPGCSNQR). Residues 114–193 (SLKGETSVTN…GCSNQRPAED (80 aa)) are disordered. The UBX domain maps to 313 to 391 (DRSTIARIQF…ELAPSASVVL (79 aa)). The stretch at 412–432 (LLGTVLYPFLAIWRLISNFLF) is an intramembrane region. The Cytoplasmic portion of the chain corresponds to 433 to 506 (SNPPPAQTSA…TWNGNSTQQM (74 aa)). The segment at 437 to 506 (PAQTSARATS…TWNGNSTQQM (70 aa)) is disordered. Over residues 444–456 (ATSTEPSNSASSS) the composition is skewed to low complexity. Positions 457 to 489 (KSEKREPVRKRVLEKRGEDFKKEGKIYRLRTQD) are enriched in basic and acidic residues. Residue Thr-487 is modified to Phosphothreonine. A compositionally biased stretch (polar residues) spans 496–506 (NTWNGNSTQQM).

As to quaternary structure, directly interacts with VCP. Interacts with UBQLN1. Forms a complex with VCP and UBQLN1.

It localises to the endoplasmic reticulum membrane. Its subcellular location is the nucleus envelope. In terms of biological role, involved in endoplasmic reticulum-associated protein degradation (ERAD). Acts as a platform to recruit both UBQLN1 and VCP to the ER during ERAD. The protein is UBX domain-containing protein 4 (Ubxn4) of Rattus norvegicus (Rat).